A 376-amino-acid chain; its full sequence is Glycerol-3-phosphate acyltransferase 9 (376 aa).

Over 1 to 78 (MSSTAGRLVT…SNPPEPWNWN (78 aa)) the chain is Cytoplasmic. Serine 13 carries the post-translational modification Phosphoserine. Transmembrane regions (helical) follow at residues 79 to 99 (IYLF…LFPL), 102 to 122 (FTLA…NALL), and 135 to 155 (VLVE…VKYH). Topologically, residues 156 to 376 (GPRPSIRPKQ…ESILARLEEK (221 aa)) are cytoplasmic. Positions 168 to 180 (VANHTSMIDFIVL) are catalytic. Residues 171–176 (HTSMID) carry the HXXXXD motif motif. 209–218 (GCIWFNRSEA) contacts sn-glycerol 3-phosphate. The interval 242 to 262 (IFPEGTCVNNNYTVMFKKGAF) is glycerol-3-phosphate binding. Residues 266 to 275 (CTVCPIAIKY) are catalytic. The interval 369-373 (ILARL) is endoplasmic reticulum targeting.

This sequence belongs to the 1-acyl-sn-glycerol-3-phosphate acyltransferase family. As to quaternary structure, self-interacts. Interacts with LPAT2 and LPCAT2. As to expression, up-regulated during embryogenesis. Expressed in seedlings, leaves, stems, roots, floral buds, flowers, pollen, and siliques at various developmental stages.

It localises to the endoplasmic reticulum membrane. The enzyme catalyses sn-glycerol 3-phosphate + an acyl-CoA = a 1-acyl-sn-glycero-3-phosphate + CoA. The protein operates within glycerolipid metabolism; triacylglycerol biosynthesis. Functionally, essential protein. Required for male and female gametophytes development. Exhibits sn-1 acyltransferase activity with high specificity for acyl-coenzyme A, thus triggering storage lipid biosynthesis and playing an important role in the Kennedy pathway of glycerolipid biosynthesis. Catalyzes triacylglycerol (TAG) accumulation involved in membrane lipid and oil biosynthesis, especially in seeds. Also contributes to the biosynthesis of both polar lipids and TAG in developing leaves, as well as lipid droplet production in developing pollen grains. Seems to not contribute to surface lipid biosynthesis (e.g. waxes and cutin). This is Glycerol-3-phosphate acyltransferase 9 from Arabidopsis thaliana (Mouse-ear cress).